A 419-amino-acid chain; its full sequence is Protein translocase subunit SecY (419 aa).

10 helical membrane-spanning segments follow: residues 19 to 39, 64 to 84, 113 to 133, 143 to 163, 167 to 189, 202 to 222, 255 to 275, 299 to 319, 359 to 379, and 380 to 400; these read IMIL…ITEV, VISI…AVQF, ILTV…LRSF, FVVA…SEVI, GIGN…FLIN, SNLY…FSTL, FGQA…FLTT, IFYF…YTLI, FVGS…AAAL, and GVHP…SIIN.

It belongs to the SecY/SEC61-alpha family. In terms of assembly, component of the plastid Sec protein translocase complex, which is composed of at least SecY and SecE.

The protein localises to the plastid. The protein resides in the chloroplast thylakoid membrane. Its function is as follows. The central subunit of the protein translocation channel SecYE. Consists of two halves formed by TMs 1-5 and 6-10. These two domains form a lateral gate at the front which open onto the bilayer between TMs 2 and 7, and are clamped together by SecE at the back. The channel is closed by both a pore ring composed of hydrophobic SecY resides and a short helix (helix 2A) on the extracellular side of the membrane which forms a plug. The chain is Protein translocase subunit SecY from Diacronema lutheri (Unicellular marine alga).